The chain runs to 188 residues: Inosine triphosphate pyrophosphatase (188 aa).

12–17 lines the ITP pocket; the sequence is TGNKNK. A Mg(2+)-binding site is contributed by Glu-40. ITP is bound by residues Lys-52, 68–69, Lys-85, 144–147, Lys-165, and 170–171; these read DT, FGWD, and HR.

It belongs to the HAM1 NTPase family. In terms of assembly, homodimer. The cofactor is Mg(2+). Mn(2+) is required as a cofactor.

Its subcellular location is the cytoplasm. It localises to the nucleus. It catalyses the reaction ITP + H2O = IMP + diphosphate + H(+). It carries out the reaction dITP + H2O = dIMP + diphosphate + H(+). The enzyme catalyses XTP + H2O = XMP + diphosphate + H(+). In terms of biological role, pyrophosphatase that hydrolyzes non-canonical purine nucleotides such as inosine triphosphate (ITP), deoxyinosine triphosphate (dITP) or xanthosine 5'-triphosphate (XTP) to their respective monophosphate derivatives. The enzyme does not distinguish between the deoxy- and ribose forms. Probably excludes non-canonical purines from RNA and DNA precursor pools, thus preventing their incorporation into RNA and DNA and avoiding chromosomal lesions. The chain is Inosine triphosphate pyrophosphatase from Phaeosphaeria nodorum (strain SN15 / ATCC MYA-4574 / FGSC 10173) (Glume blotch fungus).